Reading from the N-terminus, the 445-residue chain is Trigger factor (445 aa).

Residues 166 to 251 (GDVVVVDFVG…AKALKRPVDV (86 aa)) form the PPIase FKBP-type domain.

The protein belongs to the FKBP-type PPIase family. Tig subfamily.

It is found in the cytoplasm. The catalysed reaction is [protein]-peptidylproline (omega=180) = [protein]-peptidylproline (omega=0). Its function is as follows. Involved in protein export. Acts as a chaperone by maintaining the newly synthesized protein in an open conformation. Functions as a peptidyl-prolyl cis-trans isomerase. The polypeptide is Trigger factor (Gluconacetobacter diazotrophicus (strain ATCC 49037 / DSM 5601 / CCUG 37298 / CIP 103539 / LMG 7603 / PAl5)).